We begin with the raw amino-acid sequence, 201 residues long: Lipoprotein signal peptidase (201 aa).

The next 3 helical transmembrane spans lie at 33-53 (LLLS…VLAV), 86-106 (GYTW…FWMG), and 110-130 (VSSW…GNLV). Active-site residues include Asp146 and Asp160. The helical transmembrane segment at 158 to 178 (VADPSVVVGAILLVVLSIFGF) threads the bilayer.

This sequence belongs to the peptidase A8 family.

It is found in the cell membrane. It carries out the reaction Release of signal peptides from bacterial membrane prolipoproteins. Hydrolyzes -Xaa-Yaa-Zaa-|-(S,diacylglyceryl)Cys-, in which Xaa is hydrophobic (preferably Leu), and Yaa (Ala or Ser) and Zaa (Gly or Ala) have small, neutral side chains.. Its pathway is protein modification; lipoprotein biosynthesis (signal peptide cleavage). This protein specifically catalyzes the removal of signal peptides from prolipoproteins. This Mycobacterium leprae (strain Br4923) protein is Lipoprotein signal peptidase.